The following is a 335-amino-acid chain: Cytoskeleton protein RodZ (335 aa).

Residues 1-111 are Cytoplasmic-facing; sequence MNTEATHDQN…LGKRRKKRDG (111 aa). The HTH cro/C1-type domain occupies 19–71; that stretch reads LRNAREQLGLSQQAVAERLCLKVSTVRDIEEDKAPADLASTFLRGYIRSYARL. Residues 30 to 49 constitute a DNA-binding region (H-T-H motif); the sequence is QQAVAERLCLKVSTVRDIEE. The helical; Signal-anchor for type II membrane protein transmembrane segment at 112 to 132 threads the bilayer; that stretch reads WLMTFTWLVLFVVIGLSGAWW. Residues 133-335 lie on the Periplasmic side of the membrane; that stretch reads WQDHKAQQEE…TLNAEQSPAQ (203 aa). The span at 148–164 shows a compositional bias: polar residues; the sequence is DQSSAELNNNQSQSVPL. A disordered region spans residues 148 to 239; the sequence is DQSSAELNNN…PDGAAPLPTD (92 aa). 2 stretches are compositionally biased toward low complexity: residues 165-205 and 217-239; these read DTST…DPQQ and DTAA…LPTD.

The protein belongs to the RodZ family.

The protein localises to the cell inner membrane. Its function is as follows. Cytoskeletal protein that is involved in cell-shape control through regulation of the length of the long axis. This chain is Cytoskeleton protein RodZ, found in Escherichia coli O6:K15:H31 (strain 536 / UPEC).